Consider the following 282-residue polypeptide: Biotin synthase (282 aa).

Residues Met1–Arg228 form the Radical SAM core domain. [4Fe-4S] cluster-binding residues include Cys17, Cys21, and Cys24. [2Fe-2S] cluster is bound by residues Cys61, Cys96, Cys154, and Arg221.

It belongs to the radical SAM superfamily. Biotin synthase family. In terms of assembly, homodimer. Requires [4Fe-4S] cluster as cofactor. It depends on [2Fe-2S] cluster as a cofactor.

It catalyses the reaction (4R,5S)-dethiobiotin + (sulfur carrier)-SH + 2 reduced [2Fe-2S]-[ferredoxin] + 2 S-adenosyl-L-methionine = (sulfur carrier)-H + biotin + 2 5'-deoxyadenosine + 2 L-methionine + 2 oxidized [2Fe-2S]-[ferredoxin]. The protein operates within cofactor biosynthesis; biotin biosynthesis; biotin from 7,8-diaminononanoate: step 2/2. Functionally, catalyzes the conversion of dethiobiotin (DTB) to biotin by the insertion of a sulfur atom into dethiobiotin via a radical-based mechanism. The sequence is that of Biotin synthase from Helicobacter pylori (strain G27).